The sequence spans 376 residues: Palmitoyl-[acyl-carrier-protein] 4-desaturase 2, chloroplastic (376 aa).

A chloroplast-targeting transit peptide spans 1 to 33 (MELHLALRASPLPAADPGRRPPPPRGNFATNCT). The Fe cation site is built by Glu-114, Glu-149, His-152, Glu-202, Glu-235, and His-238.

The protein belongs to the fatty acid desaturase type 2 family. In terms of assembly, homodimer. Requires Fe(2+) as cofactor. As to expression, preferentially expressed in the flower labellum.

It localises to the plastid. The protein resides in the chloroplast stroma. The enzyme catalyses hexadecanoyl-[ACP] + 2 reduced [2Fe-2S]-[ferredoxin] + O2 + 2 H(+) = (4Z)-hexadecenoyl-[ACP] + 2 oxidized [2Fe-2S]-[ferredoxin] + 2 H2O. It carries out the reaction octadecanoyl-[ACP] + 2 reduced [2Fe-2S]-[ferredoxin] + O2 + 2 H(+) = (9Z)-octadecenoyl-[ACP] + 2 oxidized [2Fe-2S]-[ferredoxin] + 2 H2O. Its pathway is lipid metabolism; fatty acid metabolism. Functionally, converts stearoyl-ACP to oleoyl-ACP by introduction of a cis double bond between carbons 9 and 10 of the acyl chain. Converts palmitoyl-ACP to (4Z)-hexadec-4-enoyl-ACP by introduction of a cis double bond between carbons 4 and 5 of the acyl chain. Catalyzes the desaturation of saturated fatty acid 18:0 and 16:0 to generate 18:1 (delta-9) and 16:1 (delta-4) intermediates, expected to give rise to 9-alkenes and 12-alkenes, respectively. The protein is Palmitoyl-[acyl-carrier-protein] 4-desaturase 2, chloroplastic (SAD2) of Ophrys arachnitiformis subsp. archipelagi (Orchid).